The chain runs to 276 residues: Pantothenate synthetase (276 aa).

27–34 contacts ATP; sequence MGALHKGH. Catalysis depends on H34, which acts as the Proton donor. Q58 contacts (R)-pantoate. Q58 is a binding site for beta-alanine. 147-150 lines the ATP pocket; the sequence is GKKD. Q153 serves as a coordination point for (R)-pantoate. Residues V176 and 184-187 contribute to the ATP site; that span reads LSSR.

It belongs to the pantothenate synthetase family. In terms of assembly, homodimer.

Its subcellular location is the cytoplasm. The catalysed reaction is (R)-pantoate + beta-alanine + ATP = (R)-pantothenate + AMP + diphosphate + H(+). Its pathway is cofactor biosynthesis; (R)-pantothenate biosynthesis; (R)-pantothenate from (R)-pantoate and beta-alanine: step 1/1. In terms of biological role, catalyzes the condensation of pantoate with beta-alanine in an ATP-dependent reaction via a pantoyl-adenylate intermediate. The polypeptide is Pantothenate synthetase (Helicobacter pylori (strain ATCC 700392 / 26695) (Campylobacter pylori)).